The chain runs to 126 residues: Holo-[acyl-carrier-protein] synthase (126 aa).

Asp-9 and Glu-58 together coordinate Mg(2+).

Belongs to the P-Pant transferase superfamily. AcpS family. It depends on Mg(2+) as a cofactor.

It is found in the cytoplasm. The catalysed reaction is apo-[ACP] + CoA = holo-[ACP] + adenosine 3',5'-bisphosphate + H(+). In terms of biological role, transfers the 4'-phosphopantetheine moiety from coenzyme A to a Ser of acyl-carrier-protein. The protein is Holo-[acyl-carrier-protein] synthase of Vibrio vulnificus (strain YJ016).